Consider the following 258-residue polypeptide: Lysine-rich coiled-coil protein 1 (258 aa).

The disordered stretch occupies residues 142 to 258; it reads DNSTSTHQAS…MLWDQSILGF (117 aa). A compositionally biased stretch (basic residues) spans 150-161; sequence ASHKQIHQKRKR. Composition is skewed to basic and acidic residues over residues 162–175, 183–213, and 220–232; these read HPEEGREKSEEEWS, CKEIDLDKHKSIQRKKTEVEIETVHVSTEKL, and KGRDVVSKKEERK. Positions 211-248 form a coiled coil; that stretch reads EKLKNRKEKKGRDVVSKKEERKRTKKKKEQGQERTEEE.

In Pongo abelii (Sumatran orangutan), this protein is Lysine-rich coiled-coil protein 1 (KRCC1).